The following is a 292-amino-acid chain: Acetylglutamate kinase (292 aa).

Substrate is bound by residues 64–65 (GG), Arg86, and Asn190.

This sequence belongs to the acetylglutamate kinase family. ArgB subfamily.

It localises to the cytoplasm. It catalyses the reaction N-acetyl-L-glutamate + ATP = N-acetyl-L-glutamyl 5-phosphate + ADP. The protein operates within amino-acid biosynthesis; L-arginine biosynthesis; N(2)-acetyl-L-ornithine from L-glutamate: step 2/4. Functionally, catalyzes the ATP-dependent phosphorylation of N-acetyl-L-glutamate. In Geobacter sp. (strain M21), this protein is Acetylglutamate kinase.